The following is an 86-amino-acid chain: Large ribosomal subunit protein bL27 (86 aa).

Positions 1 to 24 are disordered; it reads MATKKAGGSSRNGRDSAGRRLGVK.

Belongs to the bacterial ribosomal protein bL27 family.

The protein is Large ribosomal subunit protein bL27 of Rickettsia conorii (strain ATCC VR-613 / Malish 7).